The chain runs to 145 residues: Large ribosomal subunit protein uL11 (145 aa).

This sequence belongs to the universal ribosomal protein uL11 family. As to quaternary structure, part of the ribosomal stalk of the 50S ribosomal subunit. Interacts with L10 and the large rRNA to form the base of the stalk. L10 forms an elongated spine to which L12 dimers bind in a sequential fashion forming a multimeric L10(L12)X complex. In terms of processing, one or more lysine residues are methylated.

Forms part of the ribosomal stalk which helps the ribosome interact with GTP-bound translation factors. The sequence is that of Large ribosomal subunit protein uL11 from Rickettsia typhi (strain ATCC VR-144 / Wilmington).